The following is a 222-amino-acid chain: Small ribosomal subunit protein uS3 (222 aa).

A KH type-2 domain is found at 39 to 109 (IRNFVKKKVY…NILINIVEVK (71 aa)).

It belongs to the universal ribosomal protein uS3 family. Part of the 30S ribosomal subunit. Forms a tight complex with proteins S10 and S14.

In terms of biological role, binds the lower part of the 30S subunit head. Binds mRNA in the 70S ribosome, positioning it for translation. This Clostridium tetani (strain Massachusetts / E88) protein is Small ribosomal subunit protein uS3.